The following is an 843-amino-acid chain: Molybdenum cofactor sulfurase (843 aa).

K241 is subject to N6-(pyridoxal phosphate)lysine. C405 is a catalytic residue. In terms of domain architecture, MOSC spans Q657 to S836.

Belongs to the class-V pyridoxal-phosphate-dependent aminotransferase family. MOCOS subfamily. It depends on pyridoxal 5'-phosphate as a cofactor.

It catalyses the reaction Mo-molybdopterin + L-cysteine + AH2 = thio-Mo-molybdopterin + L-alanine + A + H2O. Its function is as follows. Sulfurates the molybdenum cofactor. Sulfation of molybdenum is essential for xanthine dehydrogenase (XDH) and aldehyde oxidase (ADO) enzymes in which molybdenum cofactor is liganded by 1 oxygen and 1 sulfur atom in active form. The polypeptide is Molybdenum cofactor sulfurase (Aspergillus fumigatus (strain CBS 144.89 / FGSC A1163 / CEA10) (Neosartorya fumigata)).